The primary structure comprises 94 residues: Large ribosomal subunit protein uL23 (94 aa).

This sequence belongs to the universal ribosomal protein uL23 family. As to quaternary structure, part of the 50S ribosomal subunit. Contacts protein L29, and trigger factor when it is bound to the ribosome.

Its function is as follows. One of the early assembly proteins it binds 23S rRNA. One of the proteins that surrounds the polypeptide exit tunnel on the outside of the ribosome. Forms the main docking site for trigger factor binding to the ribosome. The polypeptide is Large ribosomal subunit protein uL23 (Listeria innocua serovar 6a (strain ATCC BAA-680 / CLIP 11262)).